A 140-amino-acid chain; its full sequence is Neurotrophin-7 (140 aa).

A propeptide spanning residues proline 1 to arginine 7 is cleaved from the precursor. Disulfide bonds link cysteine 21-cysteine 101, cysteine 64-cysteine 129, and cysteine 89-cysteine 131.

Belongs to the NGF-beta family.

It is found in the secreted. This Cyprinus carpio (Common carp) protein is Neurotrophin-7 (ntf7).